The sequence spans 685 residues: MSEDIIDRSLELGIQCFQGEDYKGAAELFSKSLQLARSYTDRSLEGIREKVGLPKRCLHDPSRVYHPRYLVLLDNRAATWEKLNKLDRALADAAYMITVDAYNLKGYIRRGKVLQKLGRYEEALQVYENGLKQAGEAEKTHAIHAPQKFLDIVYRQRSTIKELLQSRARSSRSLTQQTVAKEPKLKRPATIDSLMPGKKRSSSKAKIDYIATLPVEIIERIMANMDTRSIIRCYSVCKLWKYRLERLPHLYQEFRLSCCYKNMLGYVNFVGALASRTAEYSCRSIQCVSGNVQEEEKSIILLLSRLMIGTRQLALMAKKCKAERIIQHICENKKLRNGVQRLSITAPVHFGHKLNLHELYTRTTSMTHLELVLNFHTPSEHVGGHLFPWQDHAVAETNLESFTLMARNYSVHHVNVIEQFEYSSVLFKRLKKLCITGIDFRLGDRNNLKWISDMPNLQELWLERNTGIEFHELITQIVQVGAPKTLRHLTFREPPNRHFDRMDQSQLGLGEEALREVFQSLESLDLMNTRFDPQLLLLLLQPACENRIARLNIGNCPRLSFARDLEILTLIFQQLPALTDLLLPNVMEYTRQGMEVLRKNIKGMKLKRLDLSFIPSLKGYELLDLLKELKGINPLGLETLTINGCTAVAPQTVDYITRNGYAQKVMCAYERTQWEHLGINSFWYR.

TPR repeat units follow at residues 6-39 (IDRS…ARSY), 70-103 (LVLL…DAYN), and 104-137 (LKGY…AGEA). The F-box domain occupies 207–254 (IDYIATLPVEIIERIMANMDTRSIIRCYSVCKLWKYRLERLPHLYQEF). 7 LRR repeats span residues 300–323 (ILLL…CKAE), 353–377 (KLNL…NFHT), 454–480 (MPNL…IVQV), 499–517 (FDRM…LREV), 518–542 (FQSL…LLQP), 562–585 (ARDL…LLPN), and 598–622 (RKNI…GYEL).

It belongs to the DIA2 family. As to quaternary structure, forms a SCF ubiquitin ligase complex which binds to DNA replication origins.

The protein localises to the nucleus. Its function is as follows. F-box protein component of a SCF ubiquitin ligase complex involved in ubiquitin-dependent protein degradation. The SCF-DIA2 complex is specifically involved in the pheromone induced degradation of phosphorylated TEC1. Involved in DNA replication, genome stability, and the control of cell cycle, probably through its association to replication origins to facilitate the ubiquitination of another origin-binding protein. This chain is Protein DIA2 (DIA2), found in Eremothecium gossypii (strain ATCC 10895 / CBS 109.51 / FGSC 9923 / NRRL Y-1056) (Yeast).